A 268-amino-acid chain; its full sequence is Tryptophan synthase alpha chain (268 aa).

Active-site proton acceptor residues include Glu49 and Asp60.

This sequence belongs to the TrpA family. As to quaternary structure, tetramer of two alpha and two beta chains.

It catalyses the reaction (1S,2R)-1-C-(indol-3-yl)glycerol 3-phosphate + L-serine = D-glyceraldehyde 3-phosphate + L-tryptophan + H2O. It participates in amino-acid biosynthesis; L-tryptophan biosynthesis; L-tryptophan from chorismate: step 5/5. The alpha subunit is responsible for the aldol cleavage of indoleglycerol phosphate to indole and glyceraldehyde 3-phosphate. This chain is Tryptophan synthase alpha chain, found in Photorhabdus laumondii subsp. laumondii (strain DSM 15139 / CIP 105565 / TT01) (Photorhabdus luminescens subsp. laumondii).